A 49-amino-acid chain; its full sequence is Zinc-containing ferredoxin (49 aa).

The N-terminal extension stretch occupies residues 1-36; the sequence is GIDPNYRTSRQVVGEHQGHKVYGPVDPPKVLGIHGT. Residues H16 and H19 each coordinate Zn(2+). K29 carries the post-translational modification N6-methyllysine. Residue H34 participates in Zn(2+) binding. Positions 37–49 are ferredoxin; it reads IVXVDFDLCIADG. C45 lines the [3Fe-4S] cluster pocket.

[3Fe-4S] cluster serves as cofactor. The cofactor is [4Fe-4S] cluster. Zn(2+) is required as a cofactor.

Its function is as follows. Ferredoxins are iron-sulfur proteins that transfer electrons in a wide variety of metabolic reactions. This chain is Zinc-containing ferredoxin (zfx), found in Acidianus infernus.